The chain runs to 267 residues: MDTNAKTIFFMAMCFIYLSFPNISHAHSEVDDETPFTYEQKTEKGPEGWGKINPHWKVCNTGRYQSPIDLTNERVSLIHDQAWTRQYKPAPAVITNRGHDIMVSWKGDAGKMTIRKTDFNLVQCHWHSPSEHTVNGTRYDLELHMVHTSARGRTAVIGVLYKLGEPNEFLTKLLNGIKAVGNKEINLGMIDPREIRFQTRKFYRYIGSLTVPPCTEGVIWTVVKRVNTISMEQITALRQAVDDGFETNSRPVQDSKGRSVWFYDPNV.

A signal peptide spans 1 to 26 (MDTNAKTIFFMAMCFIYLSFPNISHA). N-linked (GlcNAc...) asparagine glycosylation occurs at N22. Residues 34–264 (TPFTYEQKTE…SKGRSVWFYD (231 aa)) enclose the Alpha-carbonic anhydrase domain. C59 and C214 are disulfide-bonded. Residue H99 is the Proton acceptor of the active site. Positions 125 and 127 each coordinate Zn(2+). A glycan (N-linked (GlcNAc...) asparagine) is linked at N135. H144 provides a ligand contact to Zn(2+). Position 210-211 (210-211 (TV)) interacts with substrate.

It belongs to the alpha-class carbonic anhydrase family. It depends on Zn(2+) as a cofactor. Post-translationally, N-glycosylated.

Its subcellular location is the plastid. It localises to the chloroplast stroma. It catalyses the reaction hydrogencarbonate + H(+) = CO2 + H2O. In terms of biological role, reversible hydration of carbon dioxide. The polypeptide is Alpha carbonic anhydrase 4 (ACA4) (Arabidopsis thaliana (Mouse-ear cress)).